A 747-amino-acid chain; its full sequence is Cyclic di-GMP phosphodiesterase PdeF (747 aa).

Over 1–14 (MKLNATYIKIRDKW) the chain is Periplasmic. Residues 15–36 (WGLPLFLPSLILPIFAHINTFA) traverse the membrane as a helical segment. The Cytoplasmic segment spans residues 37–42 (HISSGE). The chain crosses the membrane as a helical span at residues 43–65 (VFLFYLPLALMISMMMFFSWAAL). The Periplasmic segment spans residues 66-79 (PGIALGIFVRKYAE). Residues 80–102 (LGFYETLSLTANFIIIIILCWGG) form a helical membrane-spanning segment. Residues 103-128 (YRVFTPRRNNVSHGDTRLISQRIFWQ) lie on the Cytoplasmic side of the membrane. A helical transmembrane segment spans residues 129 to 151 (IVFPATLFLILFQFAAFVGLLAS). Residues 152 to 165 (RENLVGVMPFNLGT) lie on the Periplasmic side of the membrane. Residues 166–188 (LINYQALLVGNLIGVPLCYFIIR) form a helical membrane-spanning segment. At 189–215 (VVRNPFYLRSYYSQLKQQVDAKVTKKE) the chain is on the cytoplasmic side. Residues 216–235 (FALWLLALGALLLLLCMPLN) traverse the membrane as a helical segment. Residues 236–239 (EKST) are Periplasmic-facing. The helical transmembrane segment at 240-259 (IFSTNYTLSLLLPLMMWGAM) threads the bilayer. Residues 260–265 (RYGYKL) lie on the Cytoplasmic side of the membrane. The chain crosses the membrane as a helical span at residues 266–285 (ISLLWAVVLMISIHSYQNYI). Residues 286-294 (PIYPGYTTQ) lie on the Periplasmic side of the membrane. The helical transmembrane segment at 295-317 (LTITSSSYLVFSFIVNYMAVLAT) threads the bilayer. The Cytoplasmic segment spans residues 318-747 (RQRAVVRRIQ…NEIEPIRESA (430 aa)). The region spanning 493–744 (KVAMMNRLQQ…DTLNEIEPIR (252 aa)) is the EAL domain.

It depends on Mg(2+) as a cofactor. The cofactor is Mn(2+).

The protein localises to the cell inner membrane. It catalyses the reaction 3',3'-c-di-GMP + H2O = 5'-phosphoguanylyl(3'-&gt;5')guanosine + H(+). Inhibited by pGpG. In terms of biological role, phosphodiesterase (PDE) that catalyzes the hydrolysis of cyclic-di-GMP (c-di-GMP) to 5'-pGpG. Truncated proteins consisting of the GGDEF/EAL domains (residues 319-747) or of the EAL domain alone (481-747) have c-di-GMP phosphodiesterase activity. They do not have diguanylate cyclase activity. Cyclic-di-GMP is a second messenger which controls cell surface-associated traits in bacteria. The polypeptide is Cyclic di-GMP phosphodiesterase PdeF (Escherichia coli (strain K12)).